A 199-amino-acid polypeptide reads, in one-letter code: MMQVLSIQNCATTKENPSSGKLIVLTGPSGVGKGTLMRSLLQRHPELYYSVSATTRAPRPGEVNGESYYFISRNKFEELLAQGEFLESAEFAGNYYGTPREAVLNQIQSGKLVVLEIELAGARQIRASFPEALSIFILPPSFEELEKRIRGRGQDSEEAIARRLQRATEEIQAADEFDIQIVNDDFEAALQAIEVALFG.

Residues 20 to 198 (GKLIVLTGPS…ALQAIEVALF (179 aa)) enclose the Guanylate kinase-like domain. 27 to 34 (GPSGVGKG) lines the ATP pocket.

It belongs to the guanylate kinase family.

It is found in the cytoplasm. The catalysed reaction is GMP + ATP = GDP + ADP. Functionally, essential for recycling GMP and indirectly, cGMP. The chain is Guanylate kinase from Trichormus variabilis (strain ATCC 29413 / PCC 7937) (Anabaena variabilis).